A 530-amino-acid polypeptide reads, in one-letter code: uncharacterized protein (530 aa).

Basic and acidic residues-rich tracts occupy residues M1–V11 and P28–P38. Positions M1–P38 are disordered. At M1 to S50 the chain is on the cytoplasmic side. The helical transmembrane segment at F51–V71 threads the bilayer. The Extracellular portion of the chain corresponds to A72 to S91. A helical transmembrane segment spans residues W92 to G112. Residues D113–R119 are Cytoplasmic-facing. Residues T120–D140 form a helical membrane-spanning segment. At E141–S150 the chain is on the extracellular side. The chain crosses the membrane as a helical span at residues Q151–P171. Residues K172–T180 are Cytoplasmic-facing. A helical transmembrane segment spans residues A181–L201. Topologically, residues T202–E203 are extracellular. The helical transmembrane segment at V204–A224 threads the bilayer. Topologically, residues R225 to D239 are cytoplasmic. A helical transmembrane segment spans residues A240–G260. Residues P261–M266 lie on the Extracellular side of the membrane. A helical transmembrane segment spans residues S267 to V287. At E288–R306 the chain is on the cytoplasmic side. A helical transmembrane segment spans residues L307–I327. At G328–G343 the chain is on the extracellular side. The helical transmembrane segment at V344–V364 threads the bilayer. Residues S365 to R370 lie on the Cytoplasmic side of the membrane. The chain crosses the membrane as a helical span at residues V371 to M391. Over H392–N400 the chain is Extracellular. A helical transmembrane segment spans residues L401 to L421. Residues S422 to A437 are Cytoplasmic-facing. The chain crosses the membrane as a helical span at residues I438–I458. The Extracellular segment spans residues T459–T488. The helical transmembrane segment at Y489–G509 threads the bilayer. Residues Y510–L530 are Cytoplasmic-facing.

Belongs to the major facilitator superfamily.

Its subcellular location is the cell membrane. This is an uncharacterized protein from Mycobacterium tuberculosis (strain CDC 1551 / Oshkosh).